A 234-amino-acid chain; its full sequence is Mannose/glucose-specific lectin Cramoll (234 aa).

Mn(2+) is bound by residues Glu-8 and Asp-10. Ca(2+) is bound by residues Asp-10, Tyr-12, Asn-14, and Asp-19. Tyr-12 contacts a carbohydrate. The Mn(2+) site is built by Asp-19, His-24, and Ser-34. Position 99–100 (99–100 (LY)) interacts with a carbohydrate. Residue Asp-205 coordinates Ca(2+). Arg-225 lines the a carbohydrate pocket.

This sequence belongs to the leguminous lectin family. As to quaternary structure, homotetramer. In terms of processing, the alpha and beta chains are produced by partial proteolytic processing of the lectin precursor by an asparaginyl endopeptidase.

In terms of biological role, glucose/D-mannose specific lectin. The chain is Mannose/glucose-specific lectin Cramoll from Cratylia mollis (Camaratu bean).